The following is a 203-amino-acid chain: Large ribosomal subunit protein bL25 (203 aa).

The protein belongs to the bacterial ribosomal protein bL25 family. CTC subfamily. Part of the 50S ribosomal subunit; part of the 5S rRNA/L5/L18/L25 subcomplex. Contacts the 5S rRNA. Binds to the 5S rRNA independently of L5 and L18.

Its function is as follows. This is one of the proteins that binds to the 5S RNA in the ribosome where it forms part of the central protuberance. In Psychromonas ingrahamii (strain DSM 17664 / CCUG 51855 / 37), this protein is Large ribosomal subunit protein bL25.